Consider the following 232-residue polypeptide: 5'-methylthioadenosine/S-adenosylhomocysteine nucleosidase (232 aa).

Residue Glu12 is the Proton acceptor of the active site. Substrate-binding positions include Gly78, Ile152, and 173 to 174 (ME). Catalysis depends on Asp197, which acts as the Proton donor.

It belongs to the PNP/UDP phosphorylase family. MtnN subfamily. Homodimer.

The catalysed reaction is S-adenosyl-L-homocysteine + H2O = S-(5-deoxy-D-ribos-5-yl)-L-homocysteine + adenine. It carries out the reaction S-methyl-5'-thioadenosine + H2O = 5-(methylsulfanyl)-D-ribose + adenine. The enzyme catalyses 5'-deoxyadenosine + H2O = 5-deoxy-D-ribose + adenine. It participates in amino-acid biosynthesis; L-methionine biosynthesis via salvage pathway; S-methyl-5-thio-alpha-D-ribose 1-phosphate from S-methyl-5'-thioadenosine (hydrolase route): step 1/2. Its function is as follows. Catalyzes the irreversible cleavage of the glycosidic bond in both 5'-methylthioadenosine (MTA) and S-adenosylhomocysteine (SAH/AdoHcy) to adenine and the corresponding thioribose, 5'-methylthioribose and S-ribosylhomocysteine, respectively. Also cleaves 5'-deoxyadenosine, a toxic by-product of radical S-adenosylmethionine (SAM) enzymes, into 5-deoxyribose and adenine. Thus, is required for in vivo function of the radical SAM enzymes biotin synthase and lipoic acid synthase, that are inhibited by 5'-deoxyadenosine accumulation. The polypeptide is 5'-methylthioadenosine/S-adenosylhomocysteine nucleosidase (Pectobacterium carotovorum subsp. carotovorum (strain PC1)).